We begin with the raw amino-acid sequence, 161 residues long: Probable ubiquitin-conjugating enzyme E2 17 (161 aa).

Residues I15–V161 enclose the UBC core domain. The Glycyl thioester intermediate role is filled by C99.

Belongs to the ubiquitin-conjugating enzyme family.

The enzyme catalyses S-ubiquitinyl-[E1 ubiquitin-activating enzyme]-L-cysteine + [E2 ubiquitin-conjugating enzyme]-L-cysteine = [E1 ubiquitin-activating enzyme]-L-cysteine + S-ubiquitinyl-[E2 ubiquitin-conjugating enzyme]-L-cysteine.. Its pathway is protein modification; protein ubiquitination. In terms of biological role, accepts the ubiquitin from the E1 complex and catalyzes its covalent attachment to other proteins. This is Probable ubiquitin-conjugating enzyme E2 17 (UBC17) from Arabidopsis thaliana (Mouse-ear cress).